Here is a 235-residue protein sequence, read N- to C-terminus: Type III pantothenate kinase (235 aa).

6–13 lines the ATP pocket; that stretch reads DVGNTSLK. Substrate-binding positions include Y79 and 86-89; that span reads GIDR. The Proton acceptor role is filled by D88. D109 contacts K(+). T112 is an ATP binding site. T164 contributes to the substrate binding site.

This sequence belongs to the type III pantothenate kinase family. As to quaternary structure, homodimer. The cofactor is NH4(+). Requires K(+) as cofactor.

The protein localises to the cytoplasm. The catalysed reaction is (R)-pantothenate + ATP = (R)-4'-phosphopantothenate + ADP + H(+). Its pathway is cofactor biosynthesis; coenzyme A biosynthesis; CoA from (R)-pantothenate: step 1/5. Its function is as follows. Catalyzes the phosphorylation of pantothenate (Pan), the first step in CoA biosynthesis. The sequence is that of Type III pantothenate kinase from Pseudoalteromonas translucida (strain TAC 125).